Reading from the N-terminus, the 135-residue chain is Beta/delta-urticatoxin-Ui2a (135 aa).

The signal sequence occupies residues Met1–Ala18. Residues Phe19–Asn72 constitute a propeptide that is removed on maturation. Cystine bridges form between Cys75–Cys92, Cys82–Cys97, Cys91–Cys105, Cys107–Cys121, Cys114–Cys126, and Cys120–Cys134.

It belongs to the urticatoxin-2 family. Expressed in trichomes, that are stiff epidermal hairs located on the surface of petioles and leaves.

Its subcellular location is the secreted. In terms of biological role, plant defense neurotoxin that causes pain and systemic symptoms in mammals via modulation of voltage-gated sodium channels (Nav). Potent modulator of human Nav1.5/SCN5A (EC(50)=55 nM), Nav1.6/SCN8A (EC(50)=0.86 nM), and Nav1.7/SCN9A (EC(50)=208 nM), where it shifts the activation threshold to more negative potentials and delays fast inactivation. Also shifts the voltage-dependence of steady-state fast inactivation of Nav1.6/SCN8A, but not that of Nav1.5/SCN5A or Nav1.7/SCN9A. On Nav1.7/SCN9A, principally acts by binding to extracellular loops of domain IV (Nav site 3). In vivo, intraplantar injection into mice causes numerous dose-dependent, immediate, and long-lasting spontaneous pain behaviors, while no swelling is observed in the injected paw. At the highest doses tested, systemic symptoms including hypokinesia and hypersalivation are observed. The protein is Beta/delta-urticatoxin-Ui2a of Urtica incisa (Scrub nettle).